A 523-amino-acid chain; its full sequence is Transcription factor MYB120 (523 aa).

HTH myb-type domains follow at residues 23–75 (GVIL…ANHL) and 76–130 (RPNL…KRLL). 2 DNA-binding regions (H-T-H motif) span residues 51-75 (WNAV…ANHL) and 103-126 (WARM…NTRL). 4 disordered regions span residues 140–254 (DIIP…YPTL), 332–373 (QTAT…SHYT), 396–426 (QIPQ…GAHR), and 444–470 (LASG…NNTN). Residues 147-167 (LHPHPHHQQQQQHNHHHHHHQ) are compositionally biased toward basic residues. Residues 175–185 (MYFQPQSSQRN) are compositionally biased toward polar residues. 3 stretches are compositionally biased toward low complexity: residues 202-212 (SSSSFTFHTTT), 223-232 (TPNTPSQLSS), and 341-368 (NPYS…PSFL). A compositionally biased stretch (polar residues) spans 396–410 (QIPQIDGFNNVNNFT).

Expressed in pollen grains and pollen tube. Mostly expressed in mature pollen grains, and, to a lower extent, in inflorescences and siliques.

It localises to the nucleus. Functionally, transcription activator. Binds to 5'-CAACTGTC-3' and/or 5'-TAACAAA-3' motif in target gene promoter to promote their expression. Together with MYB97 and MYB101, functions as a male factor that controls pollen tube-synergid interaction in fertilization. Required for pollen tube growth arrest and sperm cell release in the female gametophyte, probably via the regulation of pollen tube-specific gene expression. This chain is Transcription factor MYB120, found in Arabidopsis thaliana (Mouse-ear cress).